A 554-amino-acid polypeptide reads, in one-letter code: Urocanate hydratase (554 aa).

NAD(+)-binding positions include 51–52, Q129, 175–177, E195, R200, 241–242, 262–266, 272–273, and Y321; these read GG, GMG, NA, QTSAH, and YL. The active site involves C409. G491 contacts NAD(+).

It belongs to the urocanase family. Requires NAD(+) as cofactor.

It localises to the cytoplasm. It carries out the reaction 4-imidazolone-5-propanoate = trans-urocanate + H2O. It participates in amino-acid degradation; L-histidine degradation into L-glutamate; N-formimidoyl-L-glutamate from L-histidine: step 2/3. Functionally, catalyzes the conversion of urocanate to 4-imidazolone-5-propionate. The polypeptide is Urocanate hydratase (Caulobacter sp. (strain K31)).